The chain runs to 36 residues: Beta/delta/mu-theraphotoxin-Pv1 (36 aa).

Intrachain disulfides connect cysteine 3–cysteine 17, cysteine 10–cysteine 22, and cysteine 16–cysteine 30. Phenylalanine amide is present on phenylalanine 36.

This sequence belongs to the neurotoxin 10 (Hwtx-1) family. As to expression, expressed by the venom gland.

It is found in the secreted. Gating-modifier toxin that targets voltage-gated sodium channels. Inhibits the inactivation of Nav1.7/SCN9A. The protein is Beta/delta/mu-theraphotoxin-Pv1 of Poecilotheria vittata (Ghost ornamental tarantula).